A 119-amino-acid polypeptide reads, in one-letter code: Large ribosomal subunit protein bL19 (119 aa).

It belongs to the bacterial ribosomal protein bL19 family.

In terms of biological role, this protein is located at the 30S-50S ribosomal subunit interface and may play a role in the structure and function of the aminoacyl-tRNA binding site. The chain is Large ribosomal subunit protein bL19 from Photobacterium profundum (strain SS9).